The primary structure comprises 623 residues: Peptidoglycan D,D-transpeptidase MrdA (623 aa).

A helical transmembrane segment spans residues 17–37 (VIVAFGVVVVCFGILIFNLYN). Ser326 acts as the Acyl-ester intermediate in catalysis.

It belongs to the transpeptidase family. MrdA subfamily.

It localises to the cell inner membrane. The catalysed reaction is Preferential cleavage: (Ac)2-L-Lys-D-Ala-|-D-Ala. Also transpeptidation of peptidyl-alanyl moieties that are N-acyl substituents of D-alanine.. It functions in the pathway cell wall biogenesis; peptidoglycan biosynthesis. Functionally, catalyzes cross-linking of the peptidoglycan cell wall. The polypeptide is Peptidoglycan D,D-transpeptidase MrdA (Salmonella typhimurium (strain SL1344)).